The following is a 245-amino-acid chain: Eukaryotic translation initiation factor 6 (245 aa).

The residue at position 113 (Y113) is a Phosphotyrosine. T165 is subject to Phosphothreonine. S166 is subject to Phosphoserine. 2 positions are modified to phosphoserine; by CK1: S174 and S175. A Phosphoserine; by PKC modification is found at S235. Residues S239 and S243 each carry the phosphoserine modification.

Belongs to the eIF-6 family. In terms of assembly, monomer. Associates with the 60S ribosomal subunit. Interacts with RACK1. Interacts with DICER1, AGO2, TARBP2, MOV10 and RPL7A; they form a large RNA-induced silencing complex (RISC). Phosphorylation at Ser-174 and Ser-175 by CSNK1D/CK1 promotes nuclear export. In terms of processing, ufmylated by UFL1.

The protein localises to the cytoplasm. The protein resides in the nucleus. It is found in the nucleolus. Functionally, binds to the 60S ribosomal subunit and prevents its association with the 40S ribosomal subunit to form the 80S initiation complex in the cytoplasm. Behaves as a stimulatory translation initiation factor downstream insulin/growth factors. Is also involved in ribosome biogenesis. Associates with pre-60S subunits in the nucleus and is involved in its nuclear export. Cytoplasmic release of TIF6 from 60S subunits and nuclear relocalization is promoted by a RACK1 (RACK1)-dependent protein kinase C activity. In tissues responsive to insulin, controls fatty acid synthesis and glycolysis by exerting translational control of adipogenic transcription factors such as CEBPB, CEBPD and ATF4 that have G/C rich or uORF in their 5'UTR. Required for ROS-dependent megakaryocyte maturation and platelets formation, controls the expression of mitochondrial respiratory chain genes involved in reactive oxygen species (ROS) synthesis. Involved in miRNA-mediated gene silencing by the RNA-induced silencing complex (RISC). Required for both miRNA-mediated translational repression and miRNA-mediated cleavage of complementary mRNAs by RISC. Modulates cell cycle progression and global translation of pre-B cells, its activation seems to be rate-limiting in tumorigenesis and tumor growth. This is Eukaryotic translation initiation factor 6 from Bos taurus (Bovine).